The chain runs to 268 residues: Ribosomal RNA small subunit methyltransferase A (268 aa).

S-adenosyl-L-methionine is bound by residues N18, L20, G45, E66, D91, and N112.

It belongs to the class I-like SAM-binding methyltransferase superfamily. rRNA adenine N(6)-methyltransferase family. RsmA subfamily.

It localises to the cytoplasm. It catalyses the reaction adenosine(1518)/adenosine(1519) in 16S rRNA + 4 S-adenosyl-L-methionine = N(6)-dimethyladenosine(1518)/N(6)-dimethyladenosine(1519) in 16S rRNA + 4 S-adenosyl-L-homocysteine + 4 H(+). Functionally, specifically dimethylates two adjacent adenosines (A1518 and A1519) in the loop of a conserved hairpin near the 3'-end of 16S rRNA in the 30S particle. May play a critical role in biogenesis of 30S subunits. This is Ribosomal RNA small subunit methyltransferase A from Shewanella sp. (strain MR-7).